We begin with the raw amino-acid sequence, 801 residues long: Na(+)/H(+) antiporter subunit A1 (801 aa).

Transmembrane regions (helical) follow at residues L4–F25, L30–I49, L79–Y101, L108–L127, V131–R153, L166–Q188, F208–I230, S243–I265, Q270–L289, A302–H324, A339–V361, L373–A395, Y429–M451, I472–I494, A526–V548, N589–F611, I621–F641, L646–A668, A672–P694, L707–G729, and L767–I784.

This sequence belongs to the CPA3 antiporters (TC 2.A.63) subunit A family. As to quaternary structure, may form a heterooligomeric complex that consists of seven subunits: mnhA1, mnhB1, mnhC1, mnhD1, mnhE1, mnhF1 and mnhG1.

The protein resides in the cell membrane. With respect to regulation, na(+) extrusion is completely inhibited by the H(+) conductor carbonyl cyanide m-chlorophenylhydrazone (CCCP). In terms of biological role, mnh complex is a Na(+)/H(+) antiporter involved in Na(+) excretion. The chain is Na(+)/H(+) antiporter subunit A1 (mnhA1) from Staphylococcus aureus (strain MRSA252).